Consider the following 59-residue polypeptide: Temporin-HN2 (59 aa).

A signal peptide spans 1-22 (MFTLKKSLLLLLFLGTINLSLS). Positions 16-44 (TINLSLSEQERDAKEERRDEMDVEVEKRN) form a coiled coil. Positions 23–41 (EQERDAKEERRDEMDVEVE) are excised as a propeptide. At Leu57 the chain carries Leucine amide.

In terms of tissue distribution, expressed by the skin glands.

Its subcellular location is the secreted. Its function is as follows. Has antimicrobial activity against some Gram-positive bacteria and fungi but has no activity against a range of Gram-negative bacteria except P.faecalis. Active against the Gram-positive bacteria S.aureus ATCC 25923 (MIC=4.8 uM), S.carnosus KHS (MIC=19 uM), B.licheniformis X39 (MIC=19 uM) and R.rhodochrous X15 (MIC=2.4 uM) but is inactive against E.faecium 091299 and E.faecalis 981. Has a less potent antimicrobial activity against the Gram-negative bacterium P.faecalis X29 (MIC=37.5 uM) and is inactive against E.coli, P.aeruginosa and S.typhi. Has antifungal activity against C.albicans ATCC 2002 (MIC=9.5 uM) and is also active against the slime mold 090223 (MIC=9.5 uM). Has extremely low hemolytic activity against human erythrocytes (LC(50)=300 uM). This Odorrana hainanensis (Odor frog) protein is Temporin-HN2.